Consider the following 251-residue polypeptide: uncharacterized protein (251 aa).

Disordered regions lie at residues 1–92 (MGRP…PGSA) and 137–251 (KPTP…LRTH). Over residues 69 to 92 (AEGAPALLGGSPSSGSPGHPPGSA) the composition is skewed to low complexity. Residues 155-172 (SESSWQLPQLPAGSTSGS) are compositionally biased toward polar residues.

This is an uncharacterized protein from Homo sapiens (Human).